The primary structure comprises 105 residues: uncharacterized protein (105 aa).

Positions 22–105 are disordered; the sequence is GSAGHGATEA…KKRIIKGKVM (84 aa). Basic and acidic residues predominate over residues 61 to 83; sequence HDSRPARGDARKRHCQENNKTDR. The span at 93-105 shows a compositional bias: basic residues; the sequence is NRRKKRIIKGKVM.

This is an uncharacterized protein from Escherichia coli (strain K12).